The chain runs to 535 residues: Light-independent protochlorophyllide reductase subunit B (535 aa).

Position 36 (Asp-36) interacts with [4Fe-4S] cluster. Residue Asp-292 is the Proton donor of the active site. A substrate-binding site is contributed by 428–429 (GL).

This sequence belongs to the ChlB/BchB/BchZ family. As to quaternary structure, protochlorophyllide reductase is composed of three subunits; BchL, BchN and BchB. Forms a heterotetramer of two BchB and two BchN subunits. It depends on [4Fe-4S] cluster as a cofactor.

The enzyme catalyses chlorophyllide a + oxidized 2[4Fe-4S]-[ferredoxin] + 2 ADP + 2 phosphate = protochlorophyllide a + reduced 2[4Fe-4S]-[ferredoxin] + 2 ATP + 2 H2O. The protein operates within porphyrin-containing compound metabolism; bacteriochlorophyll biosynthesis (light-independent). Functionally, component of the dark-operative protochlorophyllide reductase (DPOR) that uses Mg-ATP and reduced ferredoxin to reduce ring D of protochlorophyllide (Pchlide) to form chlorophyllide a (Chlide). This reaction is light-independent. The NB-protein (BchN-BchB) is the catalytic component of the complex. This chain is Light-independent protochlorophyllide reductase subunit B, found in Chlorobaculum parvum (strain DSM 263 / NCIMB 8327) (Chlorobium vibrioforme subsp. thiosulfatophilum).